The sequence spans 335 residues: Anthranilate phosphoribosyltransferase (335 aa).

5-phospho-alpha-D-ribose 1-diphosphate-binding positions include Gly-79, 82-83 (GD), Ser-87, 89-92 (NIST), 107-115 (KHGNRSITS), and Ser-119. Gly-79 contacts anthranilate. Ser-91 contributes to the Mg(2+) binding site. Position 110 (Asn-110) interacts with anthranilate. Arg-165 contacts anthranilate. Mg(2+) contacts are provided by Asp-224 and Glu-225.

This sequence belongs to the anthranilate phosphoribosyltransferase family. In terms of assembly, homodimer. Mg(2+) serves as cofactor.

It catalyses the reaction N-(5-phospho-beta-D-ribosyl)anthranilate + diphosphate = 5-phospho-alpha-D-ribose 1-diphosphate + anthranilate. It participates in amino-acid biosynthesis; L-tryptophan biosynthesis; L-tryptophan from chorismate: step 2/5. In terms of biological role, catalyzes the transfer of the phosphoribosyl group of 5-phosphorylribose-1-pyrophosphate (PRPP) to anthranilate to yield N-(5'-phosphoribosyl)-anthranilate (PRA). This is Anthranilate phosphoribosyltransferase from Lactococcus lactis subsp. cremoris (strain SK11).